A 267-amino-acid chain; its full sequence is Diaminopimelate epimerase (267 aa).

Substrate contacts are provided by Asn15 and Asn66. The Proton donor role is filled by Cys75. Substrate contacts are provided by residues 76-77, Asn150, Asn183, and 201-202; these read GN and ER. Cys210 acts as the Proton acceptor in catalysis. 211–212 serves as a coordination point for substrate; it reads GT.

Belongs to the diaminopimelate epimerase family. Homodimer.

Its subcellular location is the cytoplasm. It catalyses the reaction (2S,6S)-2,6-diaminopimelate = meso-2,6-diaminopimelate. Its pathway is amino-acid biosynthesis; L-lysine biosynthesis via DAP pathway; DL-2,6-diaminopimelate from LL-2,6-diaminopimelate: step 1/1. In terms of biological role, catalyzes the stereoinversion of LL-2,6-diaminopimelate (L,L-DAP) to meso-diaminopimelate (meso-DAP), a precursor of L-lysine and an essential component of the bacterial peptidoglycan. This is Diaminopimelate epimerase from Bacteroides thetaiotaomicron (strain ATCC 29148 / DSM 2079 / JCM 5827 / CCUG 10774 / NCTC 10582 / VPI-5482 / E50).